The primary structure comprises 210 residues: Cytidylate kinase (210 aa).

7 to 15 (GPAASGKGT) serves as a coordination point for ATP.

Belongs to the cytidylate kinase family. Type 1 subfamily.

It is found in the cytoplasm. The enzyme catalyses CMP + ATP = CDP + ADP. It catalyses the reaction dCMP + ATP = dCDP + ADP. The sequence is that of Cytidylate kinase from Methylobacterium sp. (strain 4-46).